The sequence spans 101 residues: uncharacterized protein (101 aa).

Residues 1–18 (MSINALLYVLSLALLIWT) form the signal peptide. A helical membrane pass occupies residues 62 to 82 (FQFDSIPSSSLSLSPFPFLFF).

The protein resides in the membrane. This is an uncharacterized protein from Saccharomyces cerevisiae (strain ATCC 204508 / S288c) (Baker's yeast).